Reading from the N-terminus, the 909-residue chain is MISGLLKKLFGSRNDRLIRQYSQNVRKINALEPEIAALSDEALRGKTGEFRQRLADGATLNDLLPEAFAVVREAGKRVHGMRHFDVQLIGGMVLHDGKIAEMRTGEGKTLVATLAAYLNALPGKGVHVITVNDYLASRDAEMMGRIYGFLGLTTGCNLSRMGHAEKQLAYAADITYGTNNEFGFDYLRDNMVYATGERVQRGLNFAVVDEVDSILIDEARTPLIISGQAEDHTDLYLKMNQVAPLLKRQEGGLDDKDSVIEPGDYTVDLKAHQVLLTEQGHENAEQILVRIGLLPEGAGLYEPGNILLVHHLYAALRAHALYHKDQHYVVQNGEVVIVDEFTGRLMAGRRWSDGLHQAVEAKEGVRIQAENQTLASITFQNYFRMYGKLAGMTGTADTEAFEFHHIYGLETVVIPTNRPMVRKDENDKVYRTAKEKWEAVIADIADCVKRGQPVLVGTTSIETNEYLSGLLNKAKIAHQLLNAKQHDSEAQIVAQAGRPGVVTIATNMAGRGTDIVLGGNIEKPVSQVRDDDSVPAAEKESRIAALREEWRKVHEQVIAAGGLHIIGTERHESRRIDNQLRGRSGRQGDPGSSRFYLSLEDPLMKIFAGERLNAIMVRLKMPEGEAIEHGMVTRSLESAQRKVEQRNFDIRKQLLEYDDVANDQRKVIYQQRNELLETEDISETIQAMRQGVLHDLFRTYVPVDSVEDQWDIAGLEQALASDYLLKLPLLEWVKAEPNLDDEAILKRIIDAGEEAYAAKIAQVDAAAWHQFERNVMLQSLDTHWREHLAALDHLRQGIHLRGYAQKNPKQEYKREAFELFETLLDTVRADVSKLLMTVQIRTEAQLDEAEAPPEMENVQYHHADYDEALAAAAASTAETPVQGGPKVGRNDPCPCGSGKKYKHCHGKLS.

ATP-binding positions include Gln87, 105–109 (GEGKT), and Asp514. The disordered stretch occupies residues 879 to 909 (TPVQGGPKVGRNDPCPCGSGKKYKHCHGKLS). Zn(2+) contacts are provided by Cys893, Cys895, Cys904, and His905. The span at 899 to 909 (KKYKHCHGKLS) shows a compositional bias: basic residues.

It belongs to the SecA family. Monomer and homodimer. Part of the essential Sec protein translocation apparatus which comprises SecA, SecYEG and auxiliary proteins SecDF-YajC and YidC. The cofactor is Zn(2+).

It localises to the cell inner membrane. It is found in the cytoplasm. The catalysed reaction is ATP + H2O + cellular proteinSide 1 = ADP + phosphate + cellular proteinSide 2.. Functionally, part of the Sec protein translocase complex. Interacts with the SecYEG preprotein conducting channel. Has a central role in coupling the hydrolysis of ATP to the transfer of proteins into and across the cell membrane, serving both as a receptor for the preprotein-SecB complex and as an ATP-driven molecular motor driving the stepwise translocation of polypeptide chains across the membrane. The sequence is that of Protein translocase subunit SecA from Azoarcus sp. (strain BH72).